The chain runs to 192 residues: Secreted and transmembrane protein 1A (192 aa).

A signal peptide spans 1–27 (MMTCPSVPAIPTLWLFSILLLVVSLNA). At 28–165 (QNKSWDNPIC…SSPIEGKPGT (138 aa)) the chain is on the extracellular side. 4 N-linked (GlcNAc...) asparagine glycosylation sites follow: Asn29, Asn55, Asn84, and Asn127. A helical transmembrane segment spans residues 166–186 (LVGVITVIFILGVAGFITFIY). Residues 187–192 (YRHRRS) lie on the Cytoplasmic side of the membrane.

Belongs to the SECTM family.

It is found in the cell membrane. It localises to the secreted. This is Secreted and transmembrane protein 1A from Mus musculus (Mouse).